The following is a 143-amino-acid chain: Transcriptional regulator MraZ (143 aa).

2 consecutive SpoVT-AbrB domains span residues 5–47 (EYQH…PLTE) and 76–119 (AMEG…AKER).

Belongs to the MraZ family. Forms oligomers.

It localises to the cytoplasm. The protein localises to the nucleoid. This Lactobacillus delbrueckii subsp. bulgaricus (strain ATCC 11842 / DSM 20081 / BCRC 10696 / JCM 1002 / NBRC 13953 / NCIMB 11778 / NCTC 12712 / WDCM 00102 / Lb 14) protein is Transcriptional regulator MraZ.